The chain runs to 189 residues: Peptidyl-tRNA hydrolase (189 aa).

TRNA is bound at residue Tyr15. The Proton acceptor role is filled by His20. Phe66, Asn68, and Asn114 together coordinate tRNA.

The protein belongs to the PTH family. As to quaternary structure, monomer.

Its subcellular location is the cytoplasm. The catalysed reaction is an N-acyl-L-alpha-aminoacyl-tRNA + H2O = an N-acyl-L-amino acid + a tRNA + H(+). Its function is as follows. Hydrolyzes ribosome-free peptidyl-tRNAs (with 1 or more amino acids incorporated), which drop off the ribosome during protein synthesis, or as a result of ribosome stalling. Functionally, catalyzes the release of premature peptidyl moieties from peptidyl-tRNA molecules trapped in stalled 50S ribosomal subunits, and thus maintains levels of free tRNAs and 50S ribosomes. The polypeptide is Peptidyl-tRNA hydrolase (Streptococcus equi subsp. zooepidemicus (strain H70)).